An 87-amino-acid polypeptide reads, in one-letter code: Serine rich endogenous peptide 17 (87 aa).

The signal sequence occupies residues 1–28 (MTGKAPFFVILIAALLLLSSFFFGEVKA). Residues 32 to 87 (KQPKHRKLGNREGDENRSNEIVVQMKARVKRSKSKRGPQKKEPYKKPPCSPPTHPA) are disordered. Positions 40–49 (GNREGDENRS) are enriched in basic and acidic residues. Residues 51 to 71 (EIVVQMKARVKRSKSKRGPQK) carry the SCOOP motif motif. Basic residues predominate over residues 58-69 (ARVKRSKSKRGP). The SxS motif essential for MIK2 binding motif lies at 63–65 (SKS). A compositionally biased stretch (pro residues) spans 77 to 87 (KPPCSPPTHPA).

Belongs to the serine rich endogenous peptide (SCOOP) phytocytokine family. Interacts with MIK2 (via extracellular leucine-rich repeat domain); this interaction triggers the formation of complex between MIK2 and the BAK1/SERK3 and SERK4 coreceptors, and subsequent BAK1 activation by phosphorylation.

The protein resides in the cell membrane. Its subcellular location is the secreted. The protein localises to the extracellular space. It is found in the apoplast. Its function is as follows. Brassicaceae-specific phytocytokine (plant endogenous peptide released into the apoplast) perceived by MIK2 in a BAK1/SERK3 and SERK4 coreceptors-dependent manner, that modulates various physiological and antimicrobial processes including growth prevention and reactive oxygen species (ROS) response regulation. This chain is Serine rich endogenous peptide 17, found in Arabidopsis thaliana (Mouse-ear cress).